Consider the following 253-residue polypeptide: Ribosomal RNA small subunit methyltransferase G (253 aa).

S-adenosyl-L-methionine contacts are provided by residues G84, L89, 136-137 (IE), and R155.

Belongs to the methyltransferase superfamily. RNA methyltransferase RsmG family.

The protein resides in the cytoplasm. Specifically methylates the N7 position of a guanine in 16S rRNA. This Prochlorococcus marinus (strain SARG / CCMP1375 / SS120) protein is Ribosomal RNA small subunit methyltransferase G.